The chain runs to 107 residues: L-amino-acid oxidase (107 aa).

Residue 35 to 38 (GPMR) participates in FAD binding. Substrate-binding residues include arginine 38 and histidine 49.

Belongs to the flavin monoamine oxidase family. FIG1 subfamily. In terms of assembly, homodimer; non-covalently linked. FAD serves as cofactor. Post-translationally, N-glycosylated. In terms of tissue distribution, expressed by the venom gland.

The protein localises to the secreted. The enzyme catalyses an L-alpha-amino acid + O2 + H2O = a 2-oxocarboxylate + H2O2 + NH4(+). It carries out the reaction L-leucine + O2 + H2O = 4-methyl-2-oxopentanoate + H2O2 + NH4(+). It catalyses the reaction L-phenylalanine + O2 + H2O = 3-phenylpyruvate + H2O2 + NH4(+). The catalysed reaction is L-tryptophan + O2 + H2O = indole-3-pyruvate + H2O2 + NH4(+). The enzyme catalyses L-methionine + O2 + H2O = 4-methylsulfanyl-2-oxobutanoate + H2O2 + NH4(+). It carries out the reaction L-isoleucine + O2 + H2O = (S)-3-methyl-2-oxopentanoate + H2O2 + NH4(+). It catalyses the reaction L-arginine + O2 + H2O = 5-guanidino-2-oxopentanoate + H2O2 + NH4(+). The catalysed reaction is L-histidine + O2 + H2O = 3-(imidazol-5-yl)pyruvate + H2O2 + NH4(+). Its function is as follows. Catalyzes an oxidative deamination of predominantly hydrophobic and aromatic L-amino acids, thus producing hydrogen peroxide that may contribute to the diverse toxic effects of this enzyme. Shows high activity on L-Met, moderate activity on L-Trp, L-Leu, L-His, L-Phe, L-Arg, L-Ile, low activity on L-Val, L-Glu, L-Lys, L-Gln, L-Asn, L-Tyr, L-Ala, and no activity on L-Asp, L-Ser, L-Pro, L-Gly, L-Thr and L-Cys. Shows antimicrobial activity inhibiting the growth of both Gram-negative and Gram-positive bacteria. Also inhibits platelet aggregation induced by ADP or collagen. Effects of snake L-amino oxidases on platelets are controversial, since they either induce aggregation or inhibit agonist-induced aggregation. These different effects are probably due to different experimental conditions. This protein may also induce hemorrhage, hemolysis, edema, apoptosis, and have antiparasitic activities. In Macrovipera lebetinus (Levantine viper), this protein is L-amino-acid oxidase.